A 450-amino-acid chain; its full sequence is uncharacterized protein (450 aa).

It belongs to the ycf80 family.

The protein localises to the plastid. It localises to the chloroplast. This is an uncharacterized protein from Porphyra purpurea (Red seaweed).